The chain runs to 338 residues: DNA-directed RNA polymerase subunit alpha (338 aa).

The interval 1–234 (MIERNWNELI…DQLQIFITFE (234 aa)) is alpha N-terminal domain (alpha-NTD). Positions 250 to 338 (FNPALLKKVD…DLAKKFEDQI (89 aa)) are alpha C-terminal domain (alpha-CTD).

Belongs to the RNA polymerase alpha chain family. As to quaternary structure, homodimer. The RNAP catalytic core consists of 2 alpha, 1 beta, 1 beta' and 1 omega subunit. When a sigma factor is associated with the core the holoenzyme is formed, which can initiate transcription.

It carries out the reaction RNA(n) + a ribonucleoside 5'-triphosphate = RNA(n+1) + diphosphate. In terms of biological role, DNA-dependent RNA polymerase catalyzes the transcription of DNA into RNA using the four ribonucleoside triphosphates as substrates. This Caulobacter vibrioides (strain ATCC 19089 / CIP 103742 / CB 15) (Caulobacter crescentus) protein is DNA-directed RNA polymerase subunit alpha.